The primary structure comprises 204 residues: Peptidyl-tRNA hydrolase 2 (204 aa).

Y37 provides a ligand contact to tRNA. H42 acts as the Proton acceptor in catalysis. Positions 86, 88, and 134 each coordinate tRNA.

The protein belongs to the PTH family. As to quaternary structure, monomer.

It is found in the cytoplasm. It carries out the reaction an N-acyl-L-alpha-aminoacyl-tRNA + H2O = an N-acyl-L-amino acid + a tRNA + H(+). Functionally, hydrolyzes ribosome-free peptidyl-tRNAs (with 1 or more amino acids incorporated), which drop off the ribosome during protein synthesis, or as a result of ribosome stalling. Catalyzes the release of premature peptidyl moieties from peptidyl-tRNA molecules trapped in stalled 50S ribosomal subunits, and thus maintains levels of free tRNAs and 50S ribosomes. The chain is Peptidyl-tRNA hydrolase 2 from Corynebacterium glutamicum (strain ATCC 13032 / DSM 20300 / JCM 1318 / BCRC 11384 / CCUG 27702 / LMG 3730 / NBRC 12168 / NCIMB 10025 / NRRL B-2784 / 534).